The sequence spans 262 residues: Transmembrane protein 106A (262 aa).

A helical membrane pass occupies residues 95-115; sequence FVFLAVLICLVTSSFIVFFLF.

Belongs to the TMEM106 family. Expressed in renal cells (at protein level). Expressed in epithelial cells.

It is found in the cell membrane. Its function is as follows. Activates macrophages and polarizes them into M1-like macrophages through the activation of the MAPK and NF-kappaB signaling pathway. Upon activation, up-regulates the expression of CD80, CD86, CD69 and MHC II on macrophages, and induces the release of pro-inflammatory cytokines such as TNF, IL1B, IL6, CCL2 and nitric oxide. May play a role in inhibition of proliferation and migration. The polypeptide is Transmembrane protein 106A (TMEM106A) (Homo sapiens (Human)).